The primary structure comprises 299 residues: Acetylglutamate kinase (299 aa).

Substrate contacts are provided by residues 70 to 71 (GG), Arg92, and Asn197.

It belongs to the acetylglutamate kinase family. ArgB subfamily.

The protein localises to the cytoplasm. The catalysed reaction is N-acetyl-L-glutamate + ATP = N-acetyl-L-glutamyl 5-phosphate + ADP. Its pathway is amino-acid biosynthesis; L-arginine biosynthesis; N(2)-acetyl-L-ornithine from L-glutamate: step 2/4. In terms of biological role, catalyzes the ATP-dependent phosphorylation of N-acetyl-L-glutamate. The polypeptide is Acetylglutamate kinase (Acidiphilium cryptum (strain JF-5)).